Reading from the N-terminus, the 608-residue chain is MHPRVLEVTRRIQARSAATRQRYLEMVRAAASKGPHRGTLPCGNLAHGVAACGESDKQTLRLMNQANVAIVSAYNDMLSAHQPFERFPGLIKQALHEIGSVGQFAGGVPAMCDGVTQGEPGMELSLASRDVIAMSTAIALSHNMFDAALCLGVCDKIVPGLLIGSLRFGHLPTVFVPAGPMPTGISNKEKAAVRQLFAEGKATREELLASEMASYHAPGTCTFYGTANTNQLLVEVMGLHLPGASFVNPNTPLRDELTREAARQASRLTPENGNYVPMAEIVDEKAIVNSVVALLATGGSTNHTLHLLAIAQAAGIQLTWQDMSELSHVVPTLARIYPNGQADINHFQAAGGMSFLIRQLLDGGLLHEDVQTVAGPGLRRYTREPFLEDGRLVWREGPERSLDEAILRPLDKPFSAEGGLRLMEGNLGRGVMKVSAVAPEHQVVEAPVRIFHDQASLAAAFKAGELERDLVAVVRFQGPRANGMPELHKLTPFLGVLQDRGFKVALVTDGRMSGASGKVPAAIHVSPEAIAGGPLARLRDGDRVRVDGVNGELRVLVDDAEWQARSLEPAPQDGNLGCGRELFAFMRNAMSSAEEGACSFTESLNGWR.

[4Fe-4S] cluster-binding residues include Cys-154 and Cys-221.

This sequence belongs to the IlvD/Edd family. The cofactor is [4Fe-4S] cluster.

It catalyses the reaction 6-phospho-D-gluconate = 2-dehydro-3-deoxy-6-phospho-D-gluconate + H2O. The protein operates within carbohydrate metabolism; Entner-Doudoroff pathway. Catalyzes the dehydration of 6-phospho-D-gluconate to 2-dehydro-3-deoxy-6-phospho-D-gluconate. This chain is Phosphogluconate dehydratase, found in Pseudomonas aeruginosa (strain ATCC 15692 / DSM 22644 / CIP 104116 / JCM 14847 / LMG 12228 / 1C / PRS 101 / PAO1).